A 337-amino-acid chain; its full sequence is Pentalenene synthase (337 aa).

Residues D80, D84, N219, S223, and E227 each contribute to the Mg(2+) site. A DDXXD motif motif is present at residues 80-84 (DDLFD).

Belongs to the terpene synthase family. Monomer. Mg(2+) serves as cofactor.

The catalysed reaction is (2E,6E)-farnesyl diphosphate = pentalenene + diphosphate. It participates in sesquiterpene biosynthesis; pentalenene biosynthesis; pentalenene from farnesyl diphosphate: step 1/1. Its pathway is antibiotic biosynthesis; pentalenolactone biosynthesis. In terms of biological role, catalyzes the cyclization of farnesyl diphosphate (FPP) to the tricyclic sesquiterpene pentalenene, which is the hydrocarbon precursor of the pentalenolactone family of antibiotics produced by a variety of Streptomyces species. This chain is Pentalenene synthase (pntA), found in Streptomyces arenae.